A 249-amino-acid polypeptide reads, in one-letter code: tRNA (guanine-N(1)-)-methyltransferase (249 aa).

S-adenosyl-L-methionine is bound by residues glycine 113 and 133–138; that span reads VGDYVL.

This sequence belongs to the RNA methyltransferase TrmD family. In terms of assembly, homodimer.

The protein localises to the cytoplasm. It catalyses the reaction guanosine(37) in tRNA + S-adenosyl-L-methionine = N(1)-methylguanosine(37) in tRNA + S-adenosyl-L-homocysteine + H(+). Specifically methylates guanosine-37 in various tRNAs. The chain is tRNA (guanine-N(1)-)-methyltransferase from Tolumonas auensis (strain DSM 9187 / NBRC 110442 / TA 4).